Reading from the N-terminus, the 530-residue chain is Arginine--tRNA ligase (530 aa).

Residues A113 to H123 carry the 'HIGH' region motif.

It belongs to the class-I aminoacyl-tRNA synthetase family. Monomer.

Its subcellular location is the cytoplasm. It catalyses the reaction tRNA(Arg) + L-arginine + ATP = L-arginyl-tRNA(Arg) + AMP + diphosphate. The polypeptide is Arginine--tRNA ligase (Campylobacter jejuni subsp. jejuni serotype O:2 (strain ATCC 700819 / NCTC 11168)).